The following is a 380-amino-acid chain: Cytochrome b (380 aa).

A run of 4 helical transmembrane segments spans residues 34-54 (FGSL…LLAM), 78-99 (WLIR…YLHI), 114-134 (WNTG…GYVL), and 179-199 (FFAL…IHLT). Heme b-binding residues include His84 and His98. Residues His183 and His197 each coordinate heme b. His202 is an a ubiquinone binding site. Helical transmembrane passes span 227-247 (LKDI…ALFS), 289-309 (LGGV…PFLH), 321-341 (LSQL…WVGS), and 348-368 (FIII…ILFP).

It belongs to the cytochrome b family. The cytochrome bc1 complex contains 11 subunits: 3 respiratory subunits (MT-CYB, CYC1 and UQCRFS1), 2 core proteins (UQCRC1 and UQCRC2) and 6 low-molecular weight proteins (UQCRH/QCR6, UQCRB/QCR7, UQCRQ/QCR8, UQCR10/QCR9, UQCR11/QCR10 and a cleavage product of UQCRFS1). This cytochrome bc1 complex then forms a dimer. Heme b serves as cofactor.

The protein localises to the mitochondrion inner membrane. In terms of biological role, component of the ubiquinol-cytochrome c reductase complex (complex III or cytochrome b-c1 complex) that is part of the mitochondrial respiratory chain. The b-c1 complex mediates electron transfer from ubiquinol to cytochrome c. Contributes to the generation of a proton gradient across the mitochondrial membrane that is then used for ATP synthesis. This is Cytochrome b (MT-CYB) from Macronectes halli (Hall's giant petrel).